The chain runs to 246 residues: Bis(5'-nucleosyl)-tetraphosphatase PrpE [asymmetrical] (246 aa).

This sequence belongs to the PrpE family. Requires Ni(2+) as cofactor.

It catalyses the reaction P(1),P(4)-bis(5'-guanosyl) tetraphosphate + H2O = GMP + GTP + 2 H(+). In terms of biological role, asymmetrically hydrolyzes Ap4p to yield AMP and ATP. This chain is Bis(5'-nucleosyl)-tetraphosphatase PrpE [asymmetrical], found in Bacillus anthracis (strain A0248).